A 68-amino-acid chain; its full sequence is Large ribosomal subunit protein eL24 (68 aa).

Zn(2+) contacts are provided by cysteine 7, cysteine 10, cysteine 33, and cysteine 37. The C4-type zinc-finger motif lies at 7–37 (CSYCGREFEPGTGKMFVRNDGRVLFFCSSKC).

The protein belongs to the eukaryotic ribosomal protein eL24 family. Part of the 50S ribosomal subunit. Forms a cluster with proteins L3 and L14. The cofactor is Zn(2+).

In terms of biological role, binds to the 23S rRNA. In Thermococcus onnurineus (strain NA1), this protein is Large ribosomal subunit protein eL24.